The following is a 353-amino-acid chain: Sorbitol dehydrogenase (353 aa).

Position 45 (Cys45) interacts with Zn(2+). Tyr51 serves as a coordination point for substrate. Zn(2+) is bound by residues His70 and Glu71. Glu156 is a binding site for substrate. NAD(+) contacts are provided by residues Val184, Asp204, Arg209, 271–273, and 296–298; these read VGL and IFR. Residues Arg298 and Tyr299 each contribute to the substrate site.

The protein belongs to the zinc-containing alcohol dehydrogenase family. As to quaternary structure, homotetramer. It depends on Zn(2+) as a cofactor.

It carries out the reaction keto-D-fructose + NADH + H(+) = D-sorbitol + NAD(+). It catalyses the reaction xylitol + NAD(+) = D-xylulose + NADH + H(+). The catalysed reaction is L-iditol + NAD(+) = keto-L-sorbose + NADH + H(+). Polyol dehydrogenase that catalyzes the NAD(+)-dependent oxidation of various sugar alcohols. Is mostly active with D-sorbitol (D-glucitol), xylitol and L-iditol as substrates, leading to the C2-oxidized products D-fructose, D-xylulose and L-sorbose, respectively. In Bacillus subtilis (strain 168), this protein is Sorbitol dehydrogenase.